A 566-amino-acid polypeptide reads, in one-letter code: Developmental regulatory protein wetA (566 aa).

Disordered regions lie at residues 116 to 174 (VPAV…LMRP), 232 to 316 (STEG…SDSL), 334 to 364 (AWWP…SIQS), 381 to 400 (SSFD…VTSA), and 429 to 542 (PPVQ…RRRK). Composition is skewed to polar residues over residues 165–174 (QSFSPSLMRP) and 269–291 (AQQQ…SSPP). The span at 298–316 (SSPHSSDPQSLSSWHSDSL) shows a compositional bias: low complexity. Composition is skewed to polar residues over residues 347–364 (PSYQ…SIQS) and 381–398 (SSFD…SVVT). Over residues 435 to 448 (SRSPSLSPRGRGSP) the composition is skewed to low complexity. Over residues 449–462 (TQGSPLRNEASTKT) the composition is skewed to polar residues. The segment covering 463–473 (SPHRRGYHGRK) has biased composition (basic residues). Low complexity predominate over residues 482–500 (PKPVKGPNSSSPGSGSNKS). Residues 501–511 (LTVSFVNFTPN) show a composition bias toward polar residues.

The protein belongs to the wetA family.

Its function is as follows. BrlA, abaA and wetA are pivotal regulators of conidiophore development and conidium maturation. They act individually and together to regulate their own expression and that of numerous other sporulation-specific genes. Plays an essential role in the completion of conidial maturation and is essential for trehalose biogenesis in conidia. Negatively regulates expression of the melanin biosynthetic gene cluster. Also plays an a role in the early phase of fungal growth including proper hyphal branching. The sequence is that of Developmental regulatory protein wetA from Aspergillus fumigatus (strain ATCC MYA-4609 / CBS 101355 / FGSC A1100 / Af293) (Neosartorya fumigata).